Consider the following 976-residue polypeptide: Villin-2 (976 aa).

Gelsolin-like repeat units follow at residues F27–G77, I148–A188, G260–K302, G399–D450, N531–E571, and F633–Q674. The disordered stretch occupies residues N769 to F917. A compositionally biased stretch (basic and acidic residues) spans R782 to A794. Low complexity-rich tracts occupy residues E795 to K812, S823 to A841, and D848 to S858. S890 carries the phosphoserine modification. Over residues S908 to F917 the composition is skewed to polar residues. The 66-residue stretch at Q911 to F976 folds into the HP domain.

Belongs to the villin/gelsolin family. Expressed in all tissues examined. Mainly detected in the root epidermis and vasculature. Expressed in the root cap.

Its subcellular location is the cytoplasm. The protein resides in the cytoskeleton. In terms of biological role, ca(2+)-regulated actin-binding protein. Involved in actin filaments bundling. Caps the barbed end of actin filaments and is able to sever them in a calcium-dependent manner. Required for the construction of actin collars in pollen tubes. Acts redundantly with VLN5 (AC Q9LVC6) to generate thick actin filament bundles and to regulate polarized pollen tube growth. Acts redundantly with VLN3 (AC O81645) to regulate directional organ growth and in sclerenchyma development. The polypeptide is Villin-2 (Arabidopsis thaliana (Mouse-ear cress)).